We begin with the raw amino-acid sequence, 420 residues long: UDP-N-acetylglucosamine 1-carboxyvinyltransferase (420 aa).

22 to 23 (KN) provides a ligand contact to phosphoenolpyruvate. Arginine 93 is a UDP-N-acetyl-alpha-D-glucosamine binding site. Cysteine 117 acts as the Proton donor in catalysis. Cysteine 117 is subject to 2-(S-cysteinyl)pyruvic acid O-phosphothioketal. UDP-N-acetyl-alpha-D-glucosamine contacts are provided by aspartate 307 and isoleucine 329.

The protein belongs to the EPSP synthase family. MurA subfamily.

The protein resides in the cytoplasm. The enzyme catalyses phosphoenolpyruvate + UDP-N-acetyl-alpha-D-glucosamine = UDP-N-acetyl-3-O-(1-carboxyvinyl)-alpha-D-glucosamine + phosphate. It participates in cell wall biogenesis; peptidoglycan biosynthesis. In terms of biological role, cell wall formation. Adds enolpyruvyl to UDP-N-acetylglucosamine. This Alcanivorax borkumensis (strain ATCC 700651 / DSM 11573 / NCIMB 13689 / SK2) protein is UDP-N-acetylglucosamine 1-carboxyvinyltransferase.